A 208-amino-acid polypeptide reads, in one-letter code: Uracil phosphoribosyltransferase (208 aa).

5-phospho-alpha-D-ribose 1-diphosphate contacts are provided by residues Arg-78, Arg-103, and 130–138; that span reads DPMLATGGS. Uracil is bound by residues Ile-193 and 198–200; that span reads GDA. Asp-199 lines the 5-phospho-alpha-D-ribose 1-diphosphate pocket.

This sequence belongs to the UPRTase family. The cofactor is Mg(2+).

The catalysed reaction is UMP + diphosphate = 5-phospho-alpha-D-ribose 1-diphosphate + uracil. It functions in the pathway pyrimidine metabolism; UMP biosynthesis via salvage pathway; UMP from uracil: step 1/1. Allosterically activated by GTP. Functionally, catalyzes the conversion of uracil and 5-phospho-alpha-D-ribose 1-diphosphate (PRPP) to UMP and diphosphate. The chain is Uracil phosphoribosyltransferase from Aliivibrio fischeri (strain MJ11) (Vibrio fischeri).